The following is a 226-amino-acid chain: Deoxyribose-phosphate aldolase (226 aa).

Glu96 serves as the catalytic Proton donor/acceptor. The active-site Schiff-base intermediate with acetaldehyde is Lys157. The active-site Proton donor/acceptor is Lys185.

It belongs to the DeoC/FbaB aldolase family. DeoC type 1 subfamily.

The protein localises to the cytoplasm. It carries out the reaction 2-deoxy-D-ribose 5-phosphate = D-glyceraldehyde 3-phosphate + acetaldehyde. It functions in the pathway carbohydrate degradation; 2-deoxy-D-ribose 1-phosphate degradation; D-glyceraldehyde 3-phosphate and acetaldehyde from 2-deoxy-alpha-D-ribose 1-phosphate: step 2/2. Functionally, catalyzes a reversible aldol reaction between acetaldehyde and D-glyceraldehyde 3-phosphate to generate 2-deoxy-D-ribose 5-phosphate. This chain is Deoxyribose-phosphate aldolase, found in Gloeobacter violaceus (strain ATCC 29082 / PCC 7421).